A 485-amino-acid polypeptide reads, in one-letter code: Putative ATP-dependent RNA helicase ste13 (485 aa).

Residues 16–38 (DRESFKGQMKAQPVDMRPKTEDV) are disordered. Residues 44-72 (TEFEDYYLKRELLMGIFEAGFERPSPIQE) carry the Q motif motif. The region spanning 75–245 (IPIALSGRDI…DKHLNKPYEI (171 aa)) is the Helicase ATP-binding domain. An ATP-binding site is contributed by 88–95 (AKNGTGKT). The DEAD box signature appears at 193–196 (DEAD). Positions 255 to 415 (GVTQYYAFVD…PIPPSIDPSL (161 aa)) constitute a Helicase C-terminal domain. Positions 437–485 (LAAQQAKGQEGYHNRPNNNRGGHPRGGGNRGGYRQSNRQPRYRGQQKAD) are disordered.

It belongs to the DEAD box helicase family. DDX6/DHH1 subfamily.

It localises to the cytoplasm. It is found in the P-body. It carries out the reaction ATP + H2O = ADP + phosphate + H(+). Functionally, ATP-dependent RNA helicase involved in mRNA turnover, and more specifically in mRNA decapping. Is involved in G1/S DNA-damage checkpoint recovery, probably through the regulation of the translational status of a subset of mRNAs. May also have a role in translation and mRNA nuclear export. In Schizosaccharomyces pombe (strain 972 / ATCC 24843) (Fission yeast), this protein is Putative ATP-dependent RNA helicase ste13 (ste13).